The primary structure comprises 860 residues: Beta-glucosidase 1 (860 aa).

An N-terminal signal peptide occupies residues 1–19; the sequence is MKLSWLEAAALTAASVVSA. Asparagine 61, asparagine 211, and asparagine 252 each carry an N-linked (GlcNAc...) asparagine glycan. Aspartate 280 is a catalytic residue. Asparagine 315, asparagine 322, asparagine 354, asparagine 387, asparagine 442, asparagine 523, asparagine 542, asparagine 564, asparagine 658, asparagine 668, asparagine 690, and asparagine 712 each carry an N-linked (GlcNAc...) asparagine glycan.

Belongs to the glycosyl hydrolase 3 family.

The catalysed reaction is Hydrolysis of terminal, non-reducing beta-D-glucosyl residues with release of beta-D-glucose.. It functions in the pathway glycan metabolism; cellulose degradation. The chain is Beta-glucosidase 1 from Aspergillus aculeatus.